The primary structure comprises 590 residues: tRNA-guanine(15) transglycosylase (590 aa).

Asp90 serves as the catalytic Nucleophile. Asp125 is a substrate binding site. 3 residues coordinate Zn(2+): Cys278, Cys280, and Cys283. The region spanning 502–577 (KGRVVVKGLF…HPFIIIRRHV (76 aa)) is the PUA domain.

Belongs to the archaeosine tRNA-ribosyltransferase family. The cofactor is Zn(2+).

The catalysed reaction is guanosine(15) in tRNA + 7-cyano-7-deazaguanine = 7-cyano-7-carbaguanosine(15) in tRNA + guanine. The protein operates within tRNA modification; archaeosine-tRNA biosynthesis. Its function is as follows. Exchanges the guanine residue with 7-cyano-7-deazaguanine (preQ0) at position 15 in the dihydrouridine loop (D-loop) of archaeal tRNAs. The polypeptide is tRNA-guanine(15) transglycosylase (Korarchaeum cryptofilum (strain OPF8)).